Here is a 488-residue protein sequence, read N- to C-terminus: Sterol 14-demethylase (488 aa).

Residues 12–32 (TGLVIVATLVIAKLIFSFFTS) form a helical membrane-spanning segment. Cysteine 433 is a binding site for heme.

The protein belongs to the cytochrome P450 family. Heme serves as cofactor. As to expression, expressed in leaves, roots, stems, siliques, flowers, flower buds and seedlings.

It is found in the membrane. The enzyme catalyses a 14alpha-methyl steroid + 3 reduced [NADPH--hemoprotein reductase] + 3 O2 = a Delta(14) steroid + formate + 3 oxidized [NADPH--hemoprotein reductase] + 4 H2O + 4 H(+). Its function is as follows. Involved in sterol biosynthesis. Catalyzes the 14-alpha demethylation of obtusifoliol to 4 alpha-methyl-5 alpha-ergosta-8,14,24(28)-trien-3 beta-ol. This is Sterol 14-demethylase (CYP51G1) from Arabidopsis thaliana (Mouse-ear cress).